Reading from the N-terminus, the 740-residue chain is Dipeptidyl peptidase family member 6 (740 aa).

Residue Met1 is a topological domain, cytoplasmic. A helical; Signal-anchor for type II membrane protein transmembrane segment spans residues 2–22 (LFLPILILNLLIITHAIDIIP). Topologically, residues 23–740 (REVLFQDPKY…VMNRIFPVQG (718 aa)) are lumenal. Residues Asn108, Asn308, and Asn506 are each glycosylated (N-linked (GlcNAc...) asparagine). Active-site charge relay system residues include Ser516, Asp604, and His636. The cysteines at positions 535 and 658 are disulfide-linked. N-linked (GlcNAc...) asparagine glycosylation is present at Asn672.

The protein belongs to the peptidase S9B family. DPPIV subfamily.

Its subcellular location is the cell membrane. Removes N-terminal dipeptides sequentially from polypeptides. Essential for control of distal tip cell migration. This chain is Dipeptidyl peptidase family member 6 (dpf-6), found in Caenorhabditis elegans.